Here is an 832-residue protein sequence, read N- to C-terminus: Sodium/hydrogen exchanger 3 (832 aa).

The N-terminal stretch at 1–29 (MSGRGGCGPCWGLLLALVLALGALPWTQG) is a signal peptide. The Extracellular segment spans residues 30-50 (AEQEHHDEIQGFQIVTFKWHH). Residues 51–73 (VQDPYIIALWVLVASLAKIVFHL) form a helical membrane-spanning segment. Residues 74 to 81 (SHKVTSVV) are Cytoplasmic-facing. Residues 82-101 (PESALLIVLGLVLGGIVLAA) form a helical membrane-spanning segment. Over 102–110 (DHIASFTLT) the chain is Extracellular. Residues 111–128 (PTVFFFYLLPPIVLDAGY) form a helical membrane-spanning segment. The Cytoplasmic segment spans residues 129–131 (FMP). The helical transmembrane segment at 132 to 167 (NRLFFSNLGSILLYAVVGTVWNAATTGLSLYGVFLS) threads the bilayer. Residues G140 and S141 each coordinate a 1,2-diacyl-sn-glycero-3-phospho-(1D-myo-inositol). Residues 168–180 (GIMGELKIGLLDF) lie on the Extracellular side of the membrane. A helical membrane pass occupies residues 181–202 (LLFGSLIAAVDPVAVLAVFEEV). Residues 203 to 204 (HV) lie on the Cytoplasmic side of the membrane. A helical transmembrane segment spans residues 205-236 (NEVLFIIVFGESLLNDAVTVVLYNVFQSFVTL). Topologically, residues 237 to 243 (GGDKVTG) are extracellular. The chain crosses the membrane as a helical span at residues 244 to 278 (VDCVKGIVSFFVVSLGGTLVGVVFAFLLSLVTRFT). Topologically, residues 279 to 280 (KH) are cytoplasmic. The chain crosses the membrane as a helical span at residues 281-303 (VRVIEPGFVFIISYLSYLTSEML). At 304–305 (SL) the chain is on the extracellular side. A helical transmembrane segment spans residues 306–322 (SSILAITFCGICCQKYV). Over 323–329 (KANISEQ) the chain is Cytoplasmic. The helical transmembrane segment at 330–358 (SATTVRYTMKMLASGAETIIFMFLGISAV) threads the bilayer. Over 359 to 366 (DPLIWTWN) the chain is Extracellular. A helical transmembrane segment spans residues 367–388 (TAFVLLTLLFVSVFRAIGVVLQ). Residues 389–401 (TWLLNRYRMVQLE) lie on the Cytoplasmic side of the membrane. Position 397 (M397) interacts with a 1,2-diacyl-sn-glycero-3-phospho-(1D-myo-inositol). A helical membrane pass occupies residues 402-425 (LIDQVVMSYGGLRGAVAFALVALL). The Extracellular segment spans residues 426–432 (DGNKVKE). The helical transmembrane segment at 433–466 (KNLFVSTTIIVVFFTVIFQGLTIKPLVQWLKVKR) threads the bilayer. At 467-832 (SEHREPKLNE…GAEHPESTHM (366 aa)) the chain is on the cytoplasmic side. A 1,2-diacyl-sn-glycero-3-phospho-(1D-myo-inositol) contacts are provided by Q496, I497, and H499. Residues S554 and S562 each carry the phosphoserine modification. Positions 575 to 589 (RPSTVEASVSYLLRE) are interaction with EZR. The tract at residues 590–667 (SASAVCLDMQ…RKRLESFKSA (78 aa)) is interaction with NHERF4. Positions 591–696 (ASAVCLDMQS…AQKRRNSSVP (106 aa)) are interaction with AHCYL1. Phosphoserine occurs at positions 592 and 607. S663 bears the Phosphoserine; by SGK1 mark. Residues 664–706 (FKSAKLGLGQSKKATKHKRERERAQKRRNSSVPNGKLPLDSPA) form a disordered region. Positions 676 to 692 (KATKHKRERERAQKRRN) are enriched in basic residues. Phosphoserine is present on residues S719, S813, and S816.

Belongs to the monovalent cation:proton antiporter 1 (CPA1) transporter (TC 2.A.36) family. Homodimer. Found in the forms of complex and dynamic macromolecular complexes. Interacts with CHP1; this interaction increases trafficking and activity at the plasma membrane of SLC9A3. Interacts with CHP2 and SHANK2. Interacts with NHERF4 and interaction decreases in response to elevated calcium ion levels. Binds NHERF1 and NHERF2. Interacts with PDZK1 (via C-terminal PDZ domain). Interacts with AHCYL1; interaction is required for SLC9A3 activity. Interacts with EZR; interaction targets SLC9A3 to the apical membrane. Interacts with SNX27 (via PDZ domains); directs SLC9A3 membrane insertion from early endosomes to the plasma membrane. Post-translationally, phosphorylated by PKA, which inhibits activity. Phosphorylation at Ser-663 by SGK1 is associated with increased abundance at the cell membrane and activity. Phosphorylation at Ser-719 by CSNK2A1 regulates SLC9A3 activity through the formation of multiple signaling complexes. As to expression, intestinal and kidney specific. Most abundant in kidney cortex, followed equally by ileum and ascending colon, then kidney medulla and jejunum. Is absent from duodenum and descending colon.

Its subcellular location is the apical cell membrane. It localises to the cell membrane. It is found in the recycling endosome membrane. The protein resides in the early endosome membrane. The catalysed reaction is Na(+)(in) + H(+)(out) = Na(+)(out) + H(+)(in). With respect to regulation, seems to switch between active and inactive modes in response to various stimuli. Activated directly or indirectly by membrane phosphatidylinositol (PIs). Regulated by a variety of auxiliary proteins, which facilitate the maturation, cell surface expression and function of the transporter. Inhibited specifically by the drug tenapanor. Functionally, plasma membrane Na(+)/H(+) antiporter. Exchanges intracellular H(+) ions for extracellular Na(+) in 1:1 stoichiometry, playing a key role in salt and fluid absorption and pH homeostasis. Major apical Na(+)/H(+) exchanger in kidney and intestine playing an important role in renal and intestine Na(+) absorption and blood pressure regulation. In Oryctolagus cuniculus (Rabbit), this protein is Sodium/hydrogen exchanger 3 (SLC9A3).